The chain runs to 89 residues: Acylphosphatase (89 aa).

The Acylphosphatase-like domain occupies 3-89; the sequence is RMTAWVHGFV…RGDLTGFVER (87 aa). Catalysis depends on residues Arg18 and Asn36.

It belongs to the acylphosphatase family.

It carries out the reaction an acyl phosphate + H2O = a carboxylate + phosphate + H(+). In Rhodococcus jostii (strain RHA1), this protein is Acylphosphatase (acyP).